The following is a 396-amino-acid chain: Proteinase-activated receptor 4 (396 aa).

Positions 1–16 (MCWPLLYPLVLGLSIS) are cleaved as a signal peptide. A propeptide spans 17–59 (LAEGIQTPSIYDDVESTRGSHEGPLGPTVELKEPKSSDKPNPR) (removed for receptor activation). The disordered stretch occupies residues 28-62 (DDVESTRGSHEGPLGPTVELKEPKSSDKPNPRGYP). Residues 46–57 (ELKEPKSSDKPN) are compositionally biased toward basic and acidic residues. Over 60 to 94 (GYPGKFCANDSDTLELPASSQALLLGWVPTRLVPA) the chain is Extracellular. The N-linked (GlcNAc...) asparagine glycan is linked to Asn-68. The helical transmembrane segment at 95 to 115 (LYGLVVAVGLPANGLALWVLA) threads the bilayer. At 116–120 (TRVPR) the chain is on the cytoplasmic side. Residues 121–141 (LPSTILLMNLAVADLLLALVL) form a helical membrane-spanning segment. The Extracellular portion of the chain corresponds to 142-162 (PPRLAYHLRGQRWPFGEAACR). Cys-161 and Cys-240 form a disulfide bridge. Residues 163–183 (VATAALYGHMYGSVLLLAAVS) form a helical membrane-spanning segment. Residues 184–203 (LDRYLALVHPLRARALRGQR) are Cytoplasmic-facing. Residues 204 to 224 (LTTGLCLVAWLSAATLALPLT) form a helical membrane-spanning segment. Residues 225–255 (LHRQTFRLAGSDRMLCHDALPLTEQTSHWRP) are Extracellular-facing. The chain crosses the membrane as a helical span at residues 256-276 (AFICLAVLGCFVPLLAMGLCY). Residues 277–295 (GATLRALAANGQRYSHALR) lie on the Cytoplasmic side of the membrane. A helical membrane pass occupies residues 296-316 (LTALVLFSAVASFTPSNVLLV). The Extracellular segment spans residues 317–331 (LHYSNPSPEAWGNLY). Residues 332–355 (GAYVPSLALSTLNSCVDPFIYYYV) form a helical membrane-spanning segment. Over 356-396 (SHEFREKVRAMLCRQPEASSSSQASREAGSRGTAICSSTLL) the chain is Cytoplasmic.

The protein belongs to the G-protein coupled receptor 1 family. In terms of processing, a proteolytic cleavage generates a new N-terminus that functions as a tethered ligand. Highly expressed in the spleen. Slight expression in the heart, lung, skeletal muscle and kidney. No detectable expression in brain, liver or testis. Also detected in platelets.

It localises to the cell membrane. Functionally, receptor for activated thrombin or trypsin coupled to G proteins that stimulate phosphoinositide hydrolysis. May play a role in platelets activation. In Mus musculus (Mouse), this protein is Proteinase-activated receptor 4 (F2rl3).